The sequence spans 518 residues: Nuclear receptor ROR-gamma (518 aa).

Residues 1–30 (MDRAPQRQHRASRELLAAKKTHTSQIEVIP) form a modulating region. 2 consecutive NR C4-type zinc fingers follow at residues 31–51 (CKIC…CEGC) and 67–91 (CTRQ…LQKC). Positions 31-96 (CKICGDKSSG…RLQKCLALGM (66 aa)) form a DNA-binding region, nuclear receptor. Disordered regions lie at residues 105 to 183 (RMSK…SGSG) and 238 to 258 (HPGL…SFRS). Basic and acidic residues predominate over residues 109–118 (KQRDSLHAEV). Positions 119–130 (QKQLQQRQQQQQ) are enriched in low complexity. Residues 269–508 (EIEHLVQSVC…PPLYKELFST (240 aa)) form the NR LBD domain. An AF-2 motif is present at residues 501 to 506 (LYKELF).

This sequence belongs to the nuclear hormone receptor family. NR1 subfamily. As to quaternary structure, interacts (via AF-2 motif) with the coactivator NCOA2 (via LXXLL motif). Interacts with the corepressor NCOR1. Interacts with CRY1. Interacts (via AF-2 motif) with the coactivators NCOA1 and PPARGC1A (via LXXLL motif). Interacts (via AF-2 motif) with PROX1. Interacts with FOXP3. Interacts with NR0B2. In terms of tissue distribution, isoform 1 is widely expressed in many tissues, including liver and adipose, and highly expressed in skeletal muscle. Isoform 2 is primarily expressed in immature thymocytes.

The protein resides in the nucleus. Nuclear receptor that binds DNA as a monomer to ROR response elements (RORE) containing a single core motif half-site 5'-AGGTCA-3' preceded by a short A-T-rich sequence. Key regulator of cellular differentiation, immunity, peripheral circadian rhythm as well as lipid, steroid, xenobiotics and glucose metabolism. Considered to have intrinsic transcriptional activity, have some natural ligands like oxysterols that act as agonists (25-hydroxycholesterol) or inverse agonists (7-oxygenated sterols), enhancing or repressing the transcriptional activity, respectively. Recruits distinct combinations of cofactors to target gene regulatory regions to modulate their transcriptional expression, depending on the tissue, time and promoter contexts. Regulates the circadian expression of clock genes such as CRY1, BMAL1 and NR1D1 in peripheral tissues and in a tissue-selective manner. Competes with NR1D1 for binding to their shared DNA response element on some clock genes such as BMAL1, CRY1 and NR1D1 itself, resulting in NR1D1-mediated repression or RORC-mediated activation of the expression, leading to the circadian pattern of clock genes expression. Therefore influences the period length and stability of the clock. Involved in the regulation of the rhythmic expression of genes involved in glucose and lipid metabolism, including PLIN2 and AVPR1A. Negative regulator of adipocyte differentiation through the regulation of early phase genes expression, such as MMP3. Controls adipogenesis as well as adipocyte size and modulates insulin sensitivity in obesity. In liver, has specific and redundant functions with RORA as positive or negative modulator of expression of genes encoding phase I and Phase II proteins involved in the metabolism of lipids, steroids and xenobiotics, such as SULT1E1. Also plays a role in the regulation of hepatocyte glucose metabolism through the regulation of G6PC1 and PCK1. Regulates the rhythmic expression of PROX1 and promotes its nuclear localization. Plays an indispensable role in the induction of IFN-gamma dependent anti-mycobacterial systemic immunity. Its function is as follows. Essential for thymopoiesis and the development of several secondary lymphoid tissues, including lymph nodes and Peyer's patches. Required for the generation of LTi (lymphoid tissue inducer) cells. Regulates thymocyte survival through DNA-binding on ROREs of target gene promoter regions and recruitment of coactivaros via the AF-2. Also plays a key role, downstream of IL6 and TGFB and synergistically with RORA, for lineage specification of uncommitted CD4(+) T-helper (T(H)) cells into T(H)17 cells, antagonizing the T(H)1 program. Probably regulates IL17 and IL17F expression on T(H) by binding to the essential enhancer conserved non-coding sequence 2 (CNS2) in the IL17-IL17F locus. May also play a role in the pre-TCR activation cascade leading to the maturation of alpha/beta T-cells and may participate in the regulation of DNA accessibility in the TCR-J(alpha) locus. This chain is Nuclear receptor ROR-gamma (RORC), found in Homo sapiens (Human).